The following is a 38-amino-acid chain: MKVRPSVKPICEYCKVIRRNGRVMVICPTNPKHKQRQG.

This sequence belongs to the bacterial ribosomal protein bL36 family.

This chain is Large ribosomal subunit protein bL36, found in Streptococcus agalactiae serotype III (strain NEM316).